We begin with the raw amino-acid sequence, 1136 residues long: Nuclear pore complex protein Nup133 (1136 aa).

Residues 1-26 (MFSPRGTPGSGRRQAPRTGGRRSVSA) form a disordered region.

Belongs to the nucleoporin Nup133 family. As to quaternary structure, forms part of the Nup160 subcomplex in the nuclear pore which is composed of NUP160, NUP133, NUP107 and Nup96. This complex plays a role in RNA export and in tethering Nup98 and NUP153 to the nucleus. As to expression, widely expressed in the embryo and in adult tissues. Higher expression is observed in the brain, testes, ovary, skin, and kidney.

Its subcellular location is the nucleus. It localises to the nuclear pore complex. The protein localises to the chromosome. The protein resides in the centromere. It is found in the kinetochore. Involved in poly(A)+ RNA transport. Involved in nephrogenesis. The protein is Nuclear pore complex protein Nup133 of Danio rerio (Zebrafish).